A 208-amino-acid chain; its full sequence is Small ribosomal subunit protein uS4 (208 aa).

Positions 95–161 (MRLDALVLRA…VPLQVAAAGA (67 aa)) constitute an S4 RNA-binding domain.

The protein belongs to the universal ribosomal protein uS4 family. As to quaternary structure, part of the 30S ribosomal subunit. Contacts protein S5. The interaction surface between S4 and S5 is involved in control of translational fidelity.

Functionally, one of the primary rRNA binding proteins, it binds directly to 16S rRNA where it nucleates assembly of the body of the 30S subunit. Its function is as follows. With S5 and S12 plays an important role in translational accuracy. The sequence is that of Small ribosomal subunit protein uS4 from Pseudarthrobacter chlorophenolicus (strain ATCC 700700 / DSM 12829 / CIP 107037 / JCM 12360 / KCTC 9906 / NCIMB 13794 / A6) (Arthrobacter chlorophenolicus).